A 266-amino-acid polypeptide reads, in one-letter code: NAD-capped RNA hydrolase NudC (266 aa).

Arginine 74 lines the substrate pocket. Zn(2+)-binding residues include cysteine 103, cysteine 106, cysteine 121, and cysteine 124. Position 129 (tyrosine 129) interacts with substrate. The 124-residue stretch at 130 to 253 (PRVSPCIIVA…TIARVLIDET (124 aa)) folds into the Nudix hydrolase domain. Positions 163, 179, and 183 each coordinate a divalent metal cation. The Nudix box motif lies at 164–185 (GFVEAGETLEQCVAREVEEETG). 197-204 (QPWAFPSN) lines the substrate pocket. Glutamate 224 provides a ligand contact to a divalent metal cation. A substrate-binding site is contributed by alanine 246.

It belongs to the Nudix hydrolase family. NudC subfamily. As to quaternary structure, homodimer. Mg(2+) is required as a cofactor. It depends on Mn(2+) as a cofactor. Zn(2+) serves as cofactor.

It catalyses the reaction a 5'-end NAD(+)-phospho-ribonucleoside in mRNA + H2O = a 5'-end phospho-adenosine-phospho-ribonucleoside in mRNA + beta-nicotinamide D-ribonucleotide + 2 H(+). The catalysed reaction is NAD(+) + H2O = beta-nicotinamide D-ribonucleotide + AMP + 2 H(+). It carries out the reaction NADH + H2O = reduced beta-nicotinamide D-ribonucleotide + AMP + 2 H(+). MRNA decapping enzyme that specifically removes the nicotinamide adenine dinucleotide (NAD) cap from a subset of mRNAs by hydrolyzing the diphosphate linkage to produce nicotinamide mononucleotide (NMN) and 5' monophosphate mRNA. The NAD-cap is present at the 5'-end of some mRNAs and stabilizes RNA against 5'-processing. Has preference for mRNAs with a 5'-end purine. Catalyzes the hydrolysis of a broad range of dinucleotide pyrophosphates. The protein is NAD-capped RNA hydrolase NudC of Photobacterium profundum (strain SS9).